Here is a 127-residue protein sequence, read N- to C-terminus: Glycine cleavage system H protein (127 aa).

One can recognise a Lipoyl-binding domain in the interval 22-103; sequence EAYIGITDFA…AFANWIIKVE (82 aa). Lys63 is subject to N6-lipoyllysine.

This sequence belongs to the GcvH family. The glycine cleavage system is composed of four proteins: P, T, L and H. (R)-lipoate is required as a cofactor.

The glycine cleavage system catalyzes the degradation of glycine. The H protein shuttles the methylamine group of glycine from the P protein to the T protein. This Alkaliphilus oremlandii (strain OhILAs) (Clostridium oremlandii (strain OhILAs)) protein is Glycine cleavage system H protein.